Here is a 140-residue protein sequence, read N- to C-terminus: Ribosome-binding factor A (140 aa).

Residues 1–23 (MLRDRNRSGVRGGAEGPSQRQRR) form a disordered region.

The protein belongs to the RbfA family. Monomer. Binds 30S ribosomal subunits, but not 50S ribosomal subunits or 70S ribosomes.

It localises to the cytoplasm. Functionally, one of several proteins that assist in the late maturation steps of the functional core of the 30S ribosomal subunit. Associates with free 30S ribosomal subunits (but not with 30S subunits that are part of 70S ribosomes or polysomes). Required for efficient processing of 16S rRNA. May interact with the 5'-terminal helix region of 16S rRNA. The protein is Ribosome-binding factor A of Acidiphilium cryptum (strain JF-5).